Here is a 137-residue protein sequence, read N- to C-terminus: Histone H2B.4 (137 aa).

Basic and acidic residues predominate over residues 1–37 (MAPKAEKKPAEKKPTEEKAEKKPRAEKRVPGKEGGEK). The segment at 1–45 (MAPKAEKKPAEKKPTEEKAEKKPRAEKRVPGKEGGEKKGKKKAKK) is disordered. N6-acetyllysine occurs at positions 7 and 27. K133 is covalently cross-linked (Glycyl lysine isopeptide (Lys-Gly) (interchain with G-Cter in ubiquitin)).

This sequence belongs to the histone H2B family. In terms of assembly, the nucleosome is a histone octamer containing two molecules each of H2A, H2B, H3 and H4 assembled in one H3-H4 heterotetramer and two H2A-H2B heterodimers. The octamer wraps approximately 147 bp of DNA. In terms of processing, can be acetylated to form H2BK6ac and H2BK33ac. Post-translationally, monoubiquitinated to form H2BK143ub1; may give a specific tag for epigenetic transcriptional activation.

Its subcellular location is the nucleus. It localises to the chromosome. Its function is as follows. Core component of nucleosome. Nucleosomes wrap and compact DNA into chromatin, limiting DNA accessibility to the cellular machineries which require DNA as a template. Histones thereby play a central role in transcription regulation, DNA repair, DNA replication and chromosomal stability. DNA accessibility is regulated via a complex set of post-translational modifications of histones, also called histone code, and nucleosome remodeling. This is Histone H2B.4 from Zea mays (Maize).